Here is a 151-residue protein sequence, read N- to C-terminus: Austinoid biosynthesis clusters protein F (151 aa).

This sequence belongs to the trt14 isomerase family. Homodimer.

It participates in secondary metabolite biosynthesis; terpenoid biosynthesis. Part of the gene cluster B that mediates the biosynthesis of the fungal meroterpenoid acetoxydehydroaustin. The first step of the pathway is the synthesis of 3,5-dimethylorsellinic acid by the polyketide synthase ausA. 3,5-dimethylorsellinic acid is then prenylated by the polyprenyl transferase ausN. Further epoxidation by the FAD-dependent monooxygenase ausM and cyclization by the probable terpene cyclase ausL lead to the formation of protoaustinoid A. Protoaustinoid A is then oxidized to spiro-lactone preaustinoid A3 by the combined action of the FAD-binding monooxygenases ausB and ausC, and the dioxygenase ausE. Acid-catalyzed keto-rearrangement and ring contraction of the tetraketide portion of preaustinoid A3 by ausJ lead to the formation of preaustinoid A4. The aldo-keto reductase ausK, with the help of ausH, is involved in the next step by transforming preaustinoid A4 into isoaustinone which is in turn hydroxylated by the P450 monooxygenase ausI to form austinolide. The cytochrome P450 monooxygenase ausG then modifies austinolide to austinol. Austinol is further acetylated to austin by the O-acetyltransferase ausP, which spontaneously changes to dehydroaustin. The cytochrome P450 monooxygenase then converts dehydroaustin is into 7-dehydrodehydroaustin. The hydroxylation catalyzed by ausR permits the second O-acetyltransferase ausQ to add an additional acetyl group to the molecule, leading to the formation of acetoxydehydroaustin. Due to genetic rearrangements of the clusters and the subsequent loss of some enzymes, the end product of the Penicillium brasilianum austinoid biosynthesis clusters is acetoxydehydroaustin. This chain is Austinoid biosynthesis clusters protein F, found in Penicillium brasilianum.